Here is a 941-residue protein sequence, read N- to C-terminus: Isoleucine--tRNA ligase (941 aa).

Residues 59–69 (PYANGNIHIGH) carry the 'HIGH' region motif. E562 serves as a coordination point for L-isoleucyl-5'-AMP. Residues 603–607 (KMSKS) carry the 'KMSKS' region motif. K606 contacts ATP. Positions 904, 907, 924, and 927 each coordinate Zn(2+).

The protein belongs to the class-I aminoacyl-tRNA synthetase family. IleS type 1 subfamily. As to quaternary structure, monomer. Zn(2+) serves as cofactor.

It is found in the cytoplasm. The catalysed reaction is tRNA(Ile) + L-isoleucine + ATP = L-isoleucyl-tRNA(Ile) + AMP + diphosphate. Functionally, catalyzes the attachment of isoleucine to tRNA(Ile). As IleRS can inadvertently accommodate and process structurally similar amino acids such as valine, to avoid such errors it has two additional distinct tRNA(Ile)-dependent editing activities. One activity is designated as 'pretransfer' editing and involves the hydrolysis of activated Val-AMP. The other activity is designated 'posttransfer' editing and involves deacylation of mischarged Val-tRNA(Ile). This Haemophilus influenzae (strain ATCC 51907 / DSM 11121 / KW20 / Rd) protein is Isoleucine--tRNA ligase.